Reading from the N-terminus, the 116-residue chain is Ribosome-binding factor A (116 aa).

Belongs to the RbfA family. In terms of assembly, monomer. Binds 30S ribosomal subunits, but not 50S ribosomal subunits or 70S ribosomes.

The protein localises to the cytoplasm. One of several proteins that assist in the late maturation steps of the functional core of the 30S ribosomal subunit. Associates with free 30S ribosomal subunits (but not with 30S subunits that are part of 70S ribosomes or polysomes). Required for efficient processing of 16S rRNA. May interact with the 5'-terminal helix region of 16S rRNA. The protein is Ribosome-binding factor A of Chlorobium phaeobacteroides (strain DSM 266 / SMG 266 / 2430).